The sequence spans 443 residues: Xaa-Pro dipeptidase (443 aa).

Positions 246, 257, 339, 384, and 423 each coordinate Mn(2+).

This sequence belongs to the peptidase M24B family. Bacterial-type prolidase subfamily. Mn(2+) is required as a cofactor.

It catalyses the reaction Xaa-L-Pro dipeptide + H2O = an L-alpha-amino acid + L-proline. Splits dipeptides with a prolyl residue in the C-terminal position. In Yersinia pestis bv. Antiqua (strain Nepal516), this protein is Xaa-Pro dipeptidase.